Consider the following 226-residue polypeptide: E3 ubiquitin-protein ligase RNF186 (226 aa).

The RING-type zinc finger occupies 39–85; sequence CLVCREPYSGVRPPKLLGCQHAFCAVCLKLLLCVQDDAWSIPCPLCR. Residues 121–143 form a disordered region; sequence GLANPATLTAGQPREAGEEEQDA. The next 2 helical transmembrane spans lie at 157-177 and 179-199; these read HLLL…PGVI and WVLS…CSHP.

As to quaternary structure, interacts with BNIP1. Polyubiquitinated. 'Lys-29' autoubiquitination leads to proteasomal degradation.

It is found in the endoplasmic reticulum membrane. The enzyme catalyses S-ubiquitinyl-[E2 ubiquitin-conjugating enzyme]-L-cysteine + [acceptor protein]-L-lysine = [E2 ubiquitin-conjugating enzyme]-L-cysteine + N(6)-ubiquitinyl-[acceptor protein]-L-lysine.. Its pathway is protein modification; protein ubiquitination. In terms of biological role, E3 ubiquitin protein ligase that is part of an apoptotic signaling pathway activated by endoplasmic reticulum stress. Stimulates the expression of proteins specific of the unfolded protein response (UPR), ubiquitinates BNIP1 and regulates its localization to the mitochondrion and induces calcium release from the endoplasmic reticulum that ultimately leads to cell apoptosis. Plays a role in the maintenance of intestinal homeostasis and clearance of enteric pathogens. Upon NOD2 stimulation, ubiquitinates the ER stress sensor activating transcription factor 6/ATF6 and promotes the unfolded protein response UPR. Participates in basal level of autophagy maintenance by regulating the ubiquitination of EPHB2. Upon stimulation by ligand EFNB1, ubiquitinates EPHB2 and further recruits MAP1LC3B for autophagy induction. Controls nutrient sensing by ubiquitinating Sestrin-2/SESN2, which is an intracellular sensor of cytosolic leucine and inhibitor of mTORC1 activity. This is E3 ubiquitin-protein ligase RNF186 from Bos taurus (Bovine).